Here is a 299-residue protein sequence, read N- to C-terminus: Probable lipid kinase YegS (299 aa).

The 132-residue stretch at 2 to 133 folds into the DAGKc domain; the sequence is AEFPASLLIL…IDMAQVNKQT (132 aa). ATP is bound by residues Thr40, 66–72, and Thr95; that span reads GDGTINE. Positions 215, 218, and 220 each coordinate Mg(2+). Glu271 functions as the Proton acceptor in the catalytic mechanism.

The protein belongs to the diacylglycerol/lipid kinase family. YegS lipid kinase subfamily. Mg(2+) is required as a cofactor. Requires Ca(2+) as cofactor.

The protein resides in the cytoplasm. In terms of biological role, probably phosphorylates lipids; the in vivo substrate is unknown. The protein is Probable lipid kinase YegS of Escherichia coli O127:H6 (strain E2348/69 / EPEC).